A 700-amino-acid polypeptide reads, in one-letter code: Acetoacetyl-CoA synthetase (700 aa).

Residues 1 to 35 (MTAVSANGKTTEKHENGAHTNGTTNGTTNGSMNGN) form a disordered region. Residues 18-35 (AHTNGTTNGTTNGSMNGN) are compositionally biased toward low complexity.

The protein belongs to the ATP-dependent AMP-binding enzyme family. In terms of tissue distribution, present in most cells of the organism.

It localises to the cytoplasm. It is found in the nucleus. It catalyses the reaction acetoacetate + ATP + CoA = acetoacetyl-CoA + AMP + diphosphate. Its function is as follows. Activates acetoacetate to acetoacetyl-CoA. Negatively regulates let-60 Ras activity during vulval induction. The sequence is that of Acetoacetyl-CoA synthetase (sur-5) from Caenorhabditis elegans.